The chain runs to 173 residues: Glycine cleavage system H protein, mitochondrial (173 aa).

A mitochondrion-targeting transit peptide spans 1 to 48; it reads MALRAVRSVRAAVGGLRAISAPSAPCLPRPWGLRAGAVRELRTGPALL. The Lipoyl-binding domain maps to 66–148; sequence VGTVGISNFA…YEDGWLIKMT (83 aa). Lysine 107 carries the N6-lipoyllysine modification.

The protein belongs to the GcvH family. In terms of assembly, interacts with GLDC. The glycine cleavage system is composed of four proteins: P (GLDC), T (GCST), L (DLD) and H (GCSH). The cofactor is (R)-lipoate.

The protein resides in the mitochondrion. Functionally, the glycine cleavage system catalyzes the degradation of glycine. The H protein (GCSH) shuttles the methylamine group of glycine from the P protein (GLDC) to the T protein (GCST). Has a pivotal role in the lipoylation of enzymes involved in cellular energetics such as the mitochondrial dihydrolipoyllysine-residue acetyltransferase component of pyruvate dehydrogenase complex (DLAT), and the mitochondrial dihydrolipoyllysine-residue succinyltransferase component of 2-oxoglutarate dehydrogenase complex (DLST). This is Glycine cleavage system H protein, mitochondrial from Bos taurus (Bovine).